The following is a 527-amino-acid chain: Triostin synthetase I (527 aa).

187-188 (GG) provides a ligand contact to ATP. 230-231 (HQ) serves as a coordination point for substrate. Residues 300–302 (SAP), D406, R421, and K512 contribute to the ATP site. A substrate-binding site is contributed by K512.

It belongs to the ATP-dependent AMP-binding enzyme family. In terms of assembly, monomer.

Its function is as follows. Involved in triostin biosynthesis. Activates quinoxaline-2-carboxylic acid (QA) via catalysis of the ATP-pyrophosphate exchange reaction dependent on QA, and the formation of the corresponding adenylate. Also activates structural analogs of QA such as quinoline-2-carboxylic acid and thieno[3,2-b]pyridine-5-carboxylic acid, but not quinoline-3-carboxylic acid, quinoline-4-carboxylic acid, pyridine-2-carboxylic acid or 2-pyrazinecarboxylic acid. This is Triostin synthetase I (trsA) from Streptomyces triostinicus.